The chain runs to 167 residues: Zymogen granule membrane protein 16 (167 aa).

The signal sequence occupies residues 1–16 (MLAVALLVLLCASASA). The region spanning 24-159 (SSYSGEYGGK…IDSISLHWDT (136 aa)) is the Jacalin-type lectin domain.

It belongs to the jacalin lectin family.

The protein resides in the secreted. Its subcellular location is the extracellular space. It is found in the extracellular matrix. The protein localises to the zymogen granule lumen. It localises to the golgi apparatus lumen. Functionally, may play a role in protein trafficking. May act as a linker molecule between the submembranous matrix on the luminal side of zymogen granule membrane (ZGM) and aggregated secretory proteins during granule formation in the TGN. This Mus musculus (Mouse) protein is Zymogen granule membrane protein 16 (Zg16).